A 328-amino-acid chain; its full sequence is Glycerol-3-phosphate dehydrogenase [NAD(P)+] (328 aa).

NADPH-binding residues include W15, H35, Y51, and K107. Residues K107, G135, and S137 each contribute to the sn-glycerol 3-phosphate site. A139 contributes to the NADPH binding site. K190, D243, S253, R254, and N255 together coordinate sn-glycerol 3-phosphate. K190 acts as the Proton acceptor in catalysis. R254 serves as a coordination point for NADPH. 2 residues coordinate NADPH: L276 and E278.

This sequence belongs to the NAD-dependent glycerol-3-phosphate dehydrogenase family.

The protein localises to the cytoplasm. It carries out the reaction sn-glycerol 3-phosphate + NAD(+) = dihydroxyacetone phosphate + NADH + H(+). The enzyme catalyses sn-glycerol 3-phosphate + NADP(+) = dihydroxyacetone phosphate + NADPH + H(+). It functions in the pathway membrane lipid metabolism; glycerophospholipid metabolism. Its function is as follows. Catalyzes the reduction of the glycolytic intermediate dihydroxyacetone phosphate (DHAP) to sn-glycerol 3-phosphate (G3P), the key precursor for phospholipid synthesis. The protein is Glycerol-3-phosphate dehydrogenase [NAD(P)+] of Rhodopseudomonas palustris (strain BisA53).